Here is a 143-residue protein sequence, read N- to C-terminus: Sporulation-specific protein 73 (143 aa).

It belongs to the SPO73 family. As to quaternary structure, interacts with SPO71.

It localises to the cytoplasm. It is found in the prospore membrane. Functionally, required for spore wall assembly and ascus formation. Involved in the formation and elongation of prospore membranes. The protein is Sporulation-specific protein 73 of Saccharomyces cerevisiae (strain ATCC 204508 / S288c) (Baker's yeast).